Here is a 403-residue protein sequence, read N- to C-terminus: 3-hydroxy-3-methylglutaryl-coenzyme A reductase (403 aa).

Catalysis depends on charge relay system residues E99 and D303. The active-site Proton donor is the H398.

It belongs to the HMG-CoA reductase family.

The catalysed reaction is (R)-mevalonate + 2 NADP(+) + CoA = (3S)-3-hydroxy-3-methylglutaryl-CoA + 2 NADPH + 2 H(+). It participates in metabolic intermediate biosynthesis; (R)-mevalonate biosynthesis; (R)-mevalonate from acetyl-CoA: step 3/3. Is competitively inhibited by (R)-HMG-CoA and lovastatin (formerly called mevinolin). Functionally, catalyzes the NADPH-dependent reductive deacylation of (S)-3-hydroxy-3-methylglutaryl-CoA (HMG-CoA) to (R)-mevalonate. Functions in the mevalonate (MVA) pathway leading to isopentenyl diphosphate (IPP), a key precursor for the biosynthesis of isoprenoid compounds such as archaeal membrane lipids. Is also able to catalyze the reduction of mevaldehyde to mevalonate and the oxidative acylation of mevaldehyde to HMG-CoA. This chain is 3-hydroxy-3-methylglutaryl-coenzyme A reductase (hmgA), found in Haloferax volcanii (strain ATCC 29605 / DSM 3757 / JCM 8879 / NBRC 14742 / NCIMB 2012 / VKM B-1768 / DS2) (Halobacterium volcanii).